We begin with the raw amino-acid sequence, 471 residues long: 6-phosphofructo-2-kinase/fructose-2,6-bisphosphatase 1 (471 aa).

Ser-2 carries the post-translational modification N-acetylserine. A 6-phosphofructo-2-kinase region spans residues 2-250 (SREMGELTQT…AYYLMNIHVT (249 aa)). Ser-33 carries the post-translational modification Phosphoserine; by PKA. An ATP-binding site is contributed by 49 to 57 (GLPARGKTY). The beta-D-fructose 6-phosphate site is built by Arg-82 and Arg-105. The active site involves Asp-131. Beta-D-fructose 6-phosphate-binding residues include Thr-133 and Arg-139. Ser-141 is modified (phosphoserine). The active site involves Cys-161. 170-175 (NIKQVK) lines the ATP pocket. 3 residues coordinate beta-D-fructose 6-phosphate: Lys-175, Arg-196, and Tyr-200. The interval 251-471 (PRSIYLCRHG…EALDTVPAHY (221 aa)) is fructose-2,6-bisphosphatase. Arg-258 contacts beta-D-fructose 2,6-bisphosphate. His-259 (tele-phosphohistidine intermediate) is an active-site residue. Residues Asn-265, Gly-271, and Arg-308 each coordinate beta-D-fructose 2,6-bisphosphate. The active-site Proton donor/acceptor is the Glu-328. Beta-D-fructose 2,6-bisphosphate contacts are provided by Tyr-339, Arg-353, Lys-357, Tyr-368, Gln-394, and Arg-398. 350–353 (FALR) is a binding site for ATP. ATP is bound by residues 394–398 (QAVMR) and Tyr-430.

In the C-terminal section; belongs to the phosphoglycerate mutase family. As to quaternary structure, homodimer. Liver.

The catalysed reaction is beta-D-fructose 2,6-bisphosphate + H2O = beta-D-fructose 6-phosphate + phosphate. It carries out the reaction beta-D-fructose 6-phosphate + ATP = beta-D-fructose 2,6-bisphosphate + ADP + H(+). Its activity is regulated as follows. Phosphorylation at Ser-33 inhibits the kinase and activates the bisphosphatase. In terms of biological role, synthesis and degradation of fructose 2,6-bisphosphate. The polypeptide is 6-phosphofructo-2-kinase/fructose-2,6-bisphosphatase 1 (Mus musculus (Mouse)).